A 637-amino-acid polypeptide reads, in one-letter code: MATGQNRTTVPENLKKHLAVSVRNIQWSYGIFWSVSASQSGVLEWGDGYYNGDIKTRKTIQASEIKADQLGLRRSEQLSELYESLSVAESSSSGVAAGSQVTRRASAAALSPEDLADTEWYYLVCMSFVFNIGEGMPGRTFANGEPIWLCNAHTADSKVFSRSLLAKSAAVKTVVCFPFLGGVVEIGTTEHITEDMNVIQCVKTSFLEAPDPYATILPARSDYHIDNVLDPQQILGDEIYAPMFSTEPFPTASPSRTTNGFDQEHEQVADDHDSFMTERITGGASQVQSWQLMDDELSNCVHQSLNSSDCVSQTFVEGAAGRVAYGARKSRVQRLGQIQEQQRNVKTLSFDPRNDDVHYQSVISTIFKTNHQLILGPQFRNCDKQSSFTRWKKSSSSSSGTATVTAPSQGMLKKIIFDVPRVHQKEKLMLDSPEARDETGNHAVLEKKRREKLNERFMTLRKIIPSINKIDKVSILDDTIEYLQELERRVQELESCRESTDTETRGTMTMKRKKPCDAGERTSANCANNETGNGKKVSVNNVGEAEPADTGFTGLTDNLRIGSFGNEVVIELRCAWREGVLLEIMDVISDLHLDSHSVQSSTGDGLLCLTVNCKHKGSKIATPGMIKEALQRVAWIC.

The bHLH domain occupies 437 to 486 (DETGNHAVLEKKRREKLNERFMTLRKIIPSINKIDKVSILDDTIEYLQEL). A disordered region spans residues 497 to 521 (RESTDTETRGTMTMKRKKPCDAGER). Positions 541-637 (NVGEAEPADT…EALQRVAWIC (97 aa)) are binding with MYB0/GL1 and MYB23.

In terms of assembly, efficient DNA binding requires dimerization with another bHLH protein. Homodimer and heterodimer with BHLH2. Interacts directly with TTG1 and MYB0/GL1 to form a complex. Its interaction with TRY prevents MYB0/GL1 binding. Interacts with MYB75/PAP1, MYB90/PAP2, TT2, CPC, MYB23 and MYB66/WER. Interacts with MYB82. Mostly expressed in roots and flowers. Also present in stems and leaves, and, to a lower extent, in hypocotyls. Expressed in epidermal root hair cells (trichoblasts) and moves to root hairless cells (atrichoblasts) by a cell-to-cell movement through plasmodesmata (at protein level).

It is found in the nucleus. Functionally, transcription activator, when associated with MYB75/PAP1, MYB90/PAP2 or TT2. Involved in epidermal cell fate specification. Negatively regulates stomata formation, but, in association with TTG1 and MYB0/GL1, promotes trichome formation, branching and endoreplication. Also regulates trichome cell wall maturation. Together with MYB66/WER, promotes the formation of non-hair cells in root epidermis cells in the N position. Whereas together with CPC, promotes the formation of hair cells in root epidermis cells in the H position by inhibiting non-hair cell formation. Also seems to play a role in the activation of anthocyanin biosynthesis, probably together with MYB75/PAP1. Activates the transcription of GL2. The protein is Transcription factor GLABRA 3 (GL3) of Arabidopsis thaliana (Mouse-ear cress).